A 468-amino-acid polypeptide reads, in one-letter code: uncharacterized protein (468 aa).

12 helical membrane-spanning segments follow: residues 13-33 (LEAF…YALF), 40-60 (LMII…HCYL), 76-96 (ALLI…GGTI), 112-132 (LYVT…TSWG), 141-161 (FMGV…AVVA), 194-214 (LLYT…VYGL), 237-257 (VYHF…GSIT), 260-280 (PTIP…ILIQ), 328-348 (CFCA…TVII), 354-374 (FVHS…TMIG), 414-434 (IIEP…TLGV), and 443-463 (AILC…GIGI).

Belongs to the NhaC Na(+)/H(+) (TC 2.A.35) antiporter family.

The protein resides in the cell membrane. This is an uncharacterized protein from Haemophilus influenzae (strain ATCC 51907 / DSM 11121 / KW20 / Rd).